A 194-amino-acid polypeptide reads, in one-letter code: Thymidylate kinase (194 aa).

7–14 (GVDGVGKS) serves as a coordination point for ATP.

Belongs to the thymidylate kinase family.

The catalysed reaction is dTMP + ATP = dTDP + ADP. In terms of biological role, phosphorylation of dTMP to form dTDP in both de novo and salvage pathways of dTTP synthesis. The sequence is that of Thymidylate kinase from Campylobacter curvus (strain 525.92).